A 325-amino-acid chain; its full sequence is Elongation factor P--(R)-beta-lysine ligase (325 aa).

Substrate is bound at residue 76-78 (SPE). ATP contacts are provided by residues 100 to 102 (RNE) and asparagine 109. A substrate-binding site is contributed by tyrosine 118. 244–245 (EL) contacts ATP. Glutamate 251 contributes to the substrate binding site. Glycine 300 contributes to the ATP binding site.

It belongs to the class-II aminoacyl-tRNA synthetase family. EpmA subfamily. Homodimer.

The catalysed reaction is D-beta-lysine + L-lysyl-[protein] + ATP = N(6)-((3R)-3,6-diaminohexanoyl)-L-lysyl-[protein] + AMP + diphosphate + H(+). Functionally, with EpmB is involved in the beta-lysylation step of the post-translational modification of translation elongation factor P (EF-P). Catalyzes the ATP-dependent activation of (R)-beta-lysine produced by EpmB, forming a lysyl-adenylate, from which the beta-lysyl moiety is then transferred to the epsilon-amino group of a conserved specific lysine residue in EF-P. This chain is Elongation factor P--(R)-beta-lysine ligase, found in Enterobacter sp. (strain 638).